A 299-amino-acid chain; its full sequence is UDP-N-acetylenolpyruvoylglucosamine reductase (299 aa).

Residues 31 to 192 (VGGVAEVVFK…VDATFVGACG (162 aa)) enclose the FAD-binding PCMH-type domain. Arg172 is a catalytic residue. The active-site Proton donor is Ser221. Residue Glu291 is part of the active site.

Belongs to the MurB family. FAD serves as cofactor.

It localises to the cytoplasm. It carries out the reaction UDP-N-acetyl-alpha-D-muramate + NADP(+) = UDP-N-acetyl-3-O-(1-carboxyvinyl)-alpha-D-glucosamine + NADPH + H(+). The protein operates within cell wall biogenesis; peptidoglycan biosynthesis. Functionally, cell wall formation. The polypeptide is UDP-N-acetylenolpyruvoylglucosamine reductase (Anaplasma marginale (strain St. Maries)).